The chain runs to 146 residues: 3-hydroxyacyl-[acyl-carrier-protein] dehydratase FabZ (146 aa).

The active site involves histidine 49.

This sequence belongs to the thioester dehydratase family. FabZ subfamily.

The protein resides in the cytoplasm. The enzyme catalyses a (3R)-hydroxyacyl-[ACP] = a (2E)-enoyl-[ACP] + H2O. Functionally, involved in unsaturated fatty acids biosynthesis. Catalyzes the dehydration of short chain beta-hydroxyacyl-ACPs and long chain saturated and unsaturated beta-hydroxyacyl-ACPs. In Pseudomonas fluorescens (strain Pf0-1), this protein is 3-hydroxyacyl-[acyl-carrier-protein] dehydratase FabZ.